The following is a 61-amino-acid chain: Small ribosomal subunit protein uS14 (61 aa).

Zn(2+) contacts are provided by C24, C27, C40, and C43.

Belongs to the universal ribosomal protein uS14 family. Zinc-binding uS14 subfamily. In terms of assembly, part of the 30S ribosomal subunit. Contacts proteins S3 and S10. Zn(2+) serves as cofactor.

In terms of biological role, binds 16S rRNA, required for the assembly of 30S particles and may also be responsible for determining the conformation of the 16S rRNA at the A site. This is Small ribosomal subunit protein uS14 from Maridesulfovibrio salexigens (strain ATCC 14822 / DSM 2638 / NCIMB 8403 / VKM B-1763) (Desulfovibrio salexigens).